Consider the following 69-residue polypeptide: MNQPSLDILMKKADSRYTLVVATAKRARQITAGESSKLKHISNKPVTIALHEIGNDLITYQRLKSSQNK.

Belongs to the RNA polymerase subunit omega family. As to quaternary structure, the RNAP catalytic core consists of 2 alpha, 1 beta, 1 beta' and 1 omega subunit. When a sigma factor is associated with the core the holoenzyme is formed, which can initiate transcription.

It carries out the reaction RNA(n) + a ribonucleoside 5'-triphosphate = RNA(n+1) + diphosphate. Its function is as follows. Promotes RNA polymerase assembly. Latches the N- and C-terminal regions of the beta' subunit thereby facilitating its interaction with the beta and alpha subunits. This chain is DNA-directed RNA polymerase subunit omega, found in Carboxydothermus hydrogenoformans (strain ATCC BAA-161 / DSM 6008 / Z-2901).